Consider the following 481-residue polypeptide: Pyruvate kinase (481 aa).

A substrate-binding site is contributed by Arg-33. Residues Asn-35, Ser-37, Asp-67, and Thr-68 each contribute to the K(+) site. Residue 35–38 coordinates ATP; that stretch reads NFSH. ATP contacts are provided by Arg-74 and Lys-155. Glu-221 provides a ligand contact to Mg(2+). Gly-244, Asp-245, and Thr-277 together coordinate substrate. Asp-245 lines the Mg(2+) pocket.

Belongs to the pyruvate kinase family. Homotetramer. The cofactor is Mg(2+). Requires K(+) as cofactor.

It catalyses the reaction pyruvate + ATP = phosphoenolpyruvate + ADP + H(+). Its pathway is carbohydrate degradation; glycolysis; pyruvate from D-glyceraldehyde 3-phosphate: step 5/5. The sequence is that of Pyruvate kinase (pyk) from Chlamydia muridarum (strain MoPn / Nigg).